The chain runs to 337 residues: MIIIKNLEITYPGKRKVKAVDNVSLEIKKGEIFGIIGLSGAGKSSLLRAINGLVRPTSGEVWVDGVEITRLSSKELLNLRQKIGMIFQHFNLLDSRTVFGNVAFPLEIGGYPREQIKKRVMEVLELVGLLDKAESYPRELSGGQKQRVGIARAIAANPKILLCDEPTSALDPQTTGQILKLLAEINQKLGITIVIITHEMRVITEICDRVAVMDNGRVVEEGVVTDVFLNPWHPITKEFVNTVISKELPEEVLAHARTRRPDREVLLLRFAGNTANEPVVSRIIKETGVELSILYGNIGHLKDVPYGILAVEIFGDENRRDKVRQILHELSVKLEVV.

The ABC transporter domain maps to 4–240 (IKNLEITYPG…PWHPITKEFV (237 aa)). 37–44 (GLSGAGKS) serves as a coordination point for ATP.

Belongs to the ABC transporter superfamily. Methionine importer (TC 3.A.1.24) family. As to quaternary structure, the complex is composed of two ATP-binding proteins (MetN), two transmembrane proteins (MetI) and a solute-binding protein (MetQ).

The protein resides in the cell membrane. It carries out the reaction L-methionine(out) + ATP + H2O = L-methionine(in) + ADP + phosphate + H(+). The enzyme catalyses D-methionine(out) + ATP + H2O = D-methionine(in) + ADP + phosphate + H(+). In terms of biological role, part of the ABC transporter complex MetNIQ involved in methionine import. Responsible for energy coupling to the transport system. The sequence is that of Methionine import ATP-binding protein MetN from Carboxydothermus hydrogenoformans (strain ATCC BAA-161 / DSM 6008 / Z-2901).